A 157-amino-acid chain; its full sequence is S-ribosylhomocysteine lyase (157 aa).

Fe cation-binding residues include H54, H58, and C124.

It belongs to the LuxS family. Homodimer. Fe cation is required as a cofactor.

The enzyme catalyses S-(5-deoxy-D-ribos-5-yl)-L-homocysteine = (S)-4,5-dihydroxypentane-2,3-dione + L-homocysteine. Involved in the synthesis of autoinducer 2 (AI-2) which is secreted by bacteria and is used to communicate both the cell density and the metabolic potential of the environment. The regulation of gene expression in response to changes in cell density is called quorum sensing. Catalyzes the transformation of S-ribosylhomocysteine (RHC) to homocysteine (HC) and 4,5-dihydroxy-2,3-pentadione (DPD). This Lactobacillus acidophilus (strain ATCC 700396 / NCK56 / N2 / NCFM) protein is S-ribosylhomocysteine lyase.